Consider the following 221-residue polypeptide: Endonuclease V (221 aa).

Mg(2+) contacts are provided by Asp-43 and Asp-109.

It belongs to the endonuclease V family. Mg(2+) is required as a cofactor.

The protein resides in the cytoplasm. It carries out the reaction Endonucleolytic cleavage at apurinic or apyrimidinic sites to products with a 5'-phosphate.. Its function is as follows. DNA repair enzyme involved in the repair of deaminated bases. Selectively cleaves double-stranded DNA at the second phosphodiester bond 3' to a deoxyinosine leaving behind the intact lesion on the nicked DNA. This is Endonuclease V from Petrotoga mobilis (strain DSM 10674 / SJ95).